Reading from the N-terminus, the 159-residue chain is Large ribosomal subunit protein uL10 (159 aa).

This sequence belongs to the universal ribosomal protein uL10 family. Part of the ribosomal stalk of the 50S ribosomal subunit. The N-terminus interacts with L11 and the large rRNA to form the base of the stalk. The C-terminus forms an elongated spine to which L12 dimers bind in a sequential fashion forming a multimeric L10(L12)X complex.

In terms of biological role, forms part of the ribosomal stalk, playing a central role in the interaction of the ribosome with GTP-bound translation factors. The sequence is that of Large ribosomal subunit protein uL10 (rplJ) from Campylobacter jejuni subsp. jejuni serotype O:2 (strain ATCC 700819 / NCTC 11168).